Consider the following 339-residue polypeptide: 5-dehydro-2-deoxygluconokinase (339 aa).

Belongs to the carbohydrate kinase PfkB family.

The catalysed reaction is 5-dehydro-2-deoxy-D-gluconate + ATP = 6-phospho-5-dehydro-2-deoxy-D-gluconate + ADP + H(+). It functions in the pathway polyol metabolism; myo-inositol degradation into acetyl-CoA; acetyl-CoA from myo-inositol: step 5/7. In terms of biological role, catalyzes the phosphorylation of 5-dehydro-2-deoxy-D-gluconate (2-deoxy-5-keto-D-gluconate or DKG) to 6-phospho-5-dehydro-2-deoxy-D-gluconate (DKGP). This Clostridium beijerinckii (strain ATCC 51743 / NCIMB 8052) (Clostridium acetobutylicum) protein is 5-dehydro-2-deoxygluconokinase.